The following is a 35-amino-acid chain: Photosystem II reaction center protein T (35 aa).

The chain crosses the membrane as a helical span at residues 3 to 23; that stretch reads ALVYTFLLVSTLGIIFFAIFF.

It belongs to the PsbT family. PSII is composed of 1 copy each of membrane proteins PsbA, PsbB, PsbC, PsbD, PsbE, PsbF, PsbH, PsbI, PsbJ, PsbK, PsbL, PsbM, PsbT, PsbY, PsbZ, Psb30/Ycf12, at least 3 peripheral proteins of the oxygen-evolving complex and a large number of cofactors. It forms dimeric complexes.

The protein resides in the plastid. Its subcellular location is the chloroplast thylakoid membrane. In terms of biological role, found at the monomer-monomer interface of the photosystem II (PS II) dimer, plays a role in assembly and dimerization of PSII. PSII is a light-driven water plastoquinone oxidoreductase, using light energy to abstract electrons from H(2)O, generating a proton gradient subsequently used for ATP formation. This Oenothera argillicola (Appalachian evening primrose) protein is Photosystem II reaction center protein T.